Here is a 147-residue protein sequence, read N- to C-terminus: Transcriptional regulator MraZ (147 aa).

SpoVT-AbrB domains lie at 6-48 (NFER…NSEE) and 77-120 (TVEV…SKAK).

This sequence belongs to the MraZ family. As to quaternary structure, forms oligomers.

It is found in the cytoplasm. It localises to the nucleoid. The sequence is that of Transcriptional regulator MraZ from Mycoplasmopsis pulmonis (strain UAB CTIP) (Mycoplasma pulmonis).